We begin with the raw amino-acid sequence, 204 residues long: Methylthioribulose-1-phosphate dehydratase (204 aa).

Zn(2+) is bound by residues H95 and H97.

This sequence belongs to the aldolase class II family. MtnB subfamily. The cofactor is Zn(2+).

It catalyses the reaction 5-(methylsulfanyl)-D-ribulose 1-phosphate = 5-methylsulfanyl-2,3-dioxopentyl phosphate + H2O. It functions in the pathway amino-acid biosynthesis; L-methionine biosynthesis via salvage pathway; L-methionine from S-methyl-5-thio-alpha-D-ribose 1-phosphate: step 2/6. Catalyzes the dehydration of methylthioribulose-1-phosphate (MTRu-1-P) into 2,3-diketo-5-methylthiopentyl-1-phosphate (DK-MTP-1-P). In Parvibaculum lavamentivorans (strain DS-1 / DSM 13023 / NCIMB 13966), this protein is Methylthioribulose-1-phosphate dehydratase.